Consider the following 285-residue polypeptide: Pantothenate synthetase (285 aa).

30–37 (MGNLHDGH) is an ATP binding site. His-37 acts as the Proton donor in catalysis. Gln-61 is a binding site for (R)-pantoate. Residue Gln-61 participates in beta-alanine binding. 149-152 (GEKD) contributes to the ATP binding site. Gln-155 contacts (R)-pantoate. Residues Ile-178 and 186–189 (FSSR) contribute to the ATP site.

The protein belongs to the pantothenate synthetase family. Homodimer.

The protein localises to the cytoplasm. It carries out the reaction (R)-pantoate + beta-alanine + ATP = (R)-pantothenate + AMP + diphosphate + H(+). Its pathway is cofactor biosynthesis; (R)-pantothenate biosynthesis; (R)-pantothenate from (R)-pantoate and beta-alanine: step 1/1. Its function is as follows. Catalyzes the condensation of pantoate with beta-alanine in an ATP-dependent reaction via a pantoyl-adenylate intermediate. The protein is Pantothenate synthetase of Buchnera aphidicola subsp. Schizaphis graminum (strain Sg).